The primary structure comprises 509 residues: Dihydrolipoyl dehydrogenase, mitochondrial (509 aa).

Residues 1-35 constitute a mitochondrion transit peptide; sequence MQSWSRVYCSLAKRGHFNRISHGLQGLSAVPLRTY. Lysine 66 carries the post-translational modification N6-acetyllysine; alternate. N6-succinyllysine; alternate is present on lysine 66. Residues 71–80 and lysine 89 each bind FAD; that span reads EKNETLGGTC. Cysteine 80 and cysteine 85 form a disulfide bridge. An N6-acetyllysine; alternate mark is found at lysine 104, lysine 122, lysine 132, and lysine 143. Residues lysine 104, lysine 122, lysine 132, and lysine 143 each carry the N6-succinyllysine; alternate modification. Glycine 154 lines the FAD pocket. Lysine 159 and lysine 166 each carry N6-succinyllysine. 183-185 lines the FAD pocket; sequence TGS. Residues 220 to 227 and glutamate 243 contribute to the NAD(+) site; that span reads GAGVIGVE. An N6-succinyllysine mark is found at lysine 273 and lysine 277. Valine 278 contributes to the NAD(+) binding site. Phosphoserine occurs at positions 285 and 297. Glycine 314 contacts NAD(+). The residue at position 346 (lysine 346) is an N6-acetyllysine. Residues aspartate 355 and 361–364 contribute to the FAD site; that span reads MLAH. Residue lysine 410 is modified to N6-acetyllysine; alternate. Lysine 410 is modified (N6-succinyllysine; alternate). N6-acetyllysine is present on residues lysine 417 and lysine 420. Residue lysine 430 is modified to N6-succinyllysine. Histidine 487 acts as the Proton acceptor in catalysis. At serine 502 the chain carries Phosphoserine. Lysine 505 is subject to N6-acetyllysine; alternate. Position 505 is an N6-succinyllysine; alternate (lysine 505).

Belongs to the class-I pyridine nucleotide-disulfide oxidoreductase family. As to quaternary structure, homodimer. Part of the multimeric pyruvate dehydrogenase complex that contains multiple copies of pyruvate dehydrogenase (subunits PDHA (PDHA1 or PDHA2) and PDHB, E1), dihydrolipoamide acetyltransferase (DLAT, E2) and lipoamide dehydrogenase (DLD, E3). These subunits are bound to an inner core composed of about 48 DLAT and 12 PDHX molecules (by non covalent bonds). The 2-oxoglutarate dehydrogenase complex is composed of OGDH (2-oxoglutarate dehydrogenase; E1), DLST (dihydrolipoamide succinyltransferase; E2), DLD (dihydrolipoamide dehydrogenase; E3) and the assembly factor KGD4. It contains multiple copies of the three enzymatic components (E1, E2 and E3). In the nucleus, the 2-oxoglutarate dehydrogenase complex associates with KAT2A. Interacts with PDHX. FAD is required as a cofactor. Tyrosine phosphorylated.

Its subcellular location is the mitochondrion matrix. It localises to the nucleus. The protein localises to the cell projection. It is found in the cilium. The protein resides in the flagellum. Its subcellular location is the cytoplasmic vesicle. It localises to the secretory vesicle. The protein localises to the acrosome. It carries out the reaction N(6)-[(R)-dihydrolipoyl]-L-lysyl-[protein] + NAD(+) = N(6)-[(R)-lipoyl]-L-lysyl-[protein] + NADH + H(+). In terms of biological role, lipoamide dehydrogenase is a component of the glycine cleavage system as well as an E3 component of three alpha-ketoacid dehydrogenase complexes (pyruvate-, alpha-ketoglutarate-, and branched-chain amino acid-dehydrogenase complex). The 2-oxoglutarate dehydrogenase complex is mainly active in the mitochondrion. A fraction of the 2-oxoglutarate dehydrogenase complex also localizes in the nucleus and is required for lysine succinylation of histones: associates with KAT2A on chromatin and provides succinyl-CoA to histone succinyltransferase KAT2A. In monomeric form may have additional moonlighting function as serine protease. Involved in the hyperactivation of spermatazoa during capacitation and in the spermatazoal acrosome reaction. This is Dihydrolipoyl dehydrogenase, mitochondrial (DLD) from Macaca fascicularis (Crab-eating macaque).